A 239-amino-acid chain; its full sequence is MGRKWNNIKDKKASKDANTSRIYAKFGREIYVAAKQGEPDPESNQALRVVLERAKTYNVPRTIIDRAVEKAKGGSEENYDELRYEGFGPNGAMVIVDTLTNNVNRTAADVRAAFSKNSGNMGVNGSVAYMFDATAVIGLEGKTSDEVLEILMEADVDARDILEEEDAVIVYAEPDQFHAVQSALKDAGVEEFTVAELTMLAQNDVTLPEDAQAQFEKMVDALEDLEDVQQVYHNVDLGE.

Belongs to the TACO1 family. YeeN subfamily.

The protein resides in the cytoplasm. This is Probable transcriptional regulatory protein BAA_0622 from Bacillus anthracis (strain A0248).